The sequence spans 273 residues: Undecaprenyl-diphosphatase (273 aa).

A run of 8 helical transmembrane segments spans residues 13 to 35, 45 to 65, 90 to 110, 116 to 136, 157 to 177, 190 to 210, 222 to 242, and 252 to 272; these read LGVV…IIVG, ANTF…VMFW, LSLI…LIFH, LFNP…LIAA, AFVI…RSGA, YAAS…ATVL, GDVP…LIAI, and ISFI…YVVF.

Belongs to the UppP family.

It is found in the cell inner membrane. The enzyme catalyses di-trans,octa-cis-undecaprenyl diphosphate + H2O = di-trans,octa-cis-undecaprenyl phosphate + phosphate + H(+). In terms of biological role, catalyzes the dephosphorylation of undecaprenyl diphosphate (UPP). Confers resistance to bacitracin. This is Undecaprenyl-diphosphatase from Klebsiella pneumoniae subsp. pneumoniae (strain ATCC 700721 / MGH 78578).